Consider the following 89-residue polypeptide: Putative defensin-like protein 40 (89 aa).

The first 26 residues, 1 to 26 (MAGIANGVGLLISFMLICGGMPKGHA), serve as a signal peptide directing secretion. 4 disulfide bridges follow: C33–C88, C46–C69, C55–C81, and C59–C83.

The protein belongs to the DEFL family.

It is found in the secreted. The sequence is that of Putative defensin-like protein 40 from Arabidopsis thaliana (Mouse-ear cress).